The chain runs to 344 residues: Succinylglutamate desuccinylase (344 aa).

Zn(2+) is bound by residues H63, E66, and H160. E224 is an active-site residue.

This sequence belongs to the AspA/AstE family. Succinylglutamate desuccinylase subfamily. Zn(2+) serves as cofactor.

The catalysed reaction is N-succinyl-L-glutamate + H2O = L-glutamate + succinate. It participates in amino-acid degradation; L-arginine degradation via AST pathway; L-glutamate and succinate from L-arginine: step 5/5. Its function is as follows. Transforms N(2)-succinylglutamate into succinate and glutamate. The protein is Succinylglutamate desuccinylase of Shewanella sp. (strain MR-7).